Reading from the N-terminus, the 504-residue chain is ATP synthase subunit alpha 2 (504 aa).

Residue 169–176 participates in ATP binding; it reads GDRQTGKT.

Belongs to the ATPase alpha/beta chains family. As to quaternary structure, F-type ATPases have 2 components, CF(1) - the catalytic core - and CF(0) - the membrane proton channel. CF(1) has five subunits: alpha(3), beta(3), gamma(1), delta(1), epsilon(1). CF(0) has three main subunits: a(1), b(2) and c(9-12). The alpha and beta chains form an alternating ring which encloses part of the gamma chain. CF(1) is attached to CF(0) by a central stalk formed by the gamma and epsilon chains, while a peripheral stalk is formed by the delta and b chains.

The protein resides in the cell membrane. It carries out the reaction ATP + H2O + 4 H(+)(in) = ADP + phosphate + 5 H(+)(out). Produces ATP from ADP in the presence of a proton gradient across the membrane. The alpha chain is a regulatory subunit. This chain is ATP synthase subunit alpha 2, found in Listeria monocytogenes serovar 1/2a (strain ATCC BAA-679 / EGD-e).